Here is a 239-residue protein sequence, read N- to C-terminus: Enolase-phosphatase E1 (239 aa).

Belongs to the HAD-like hydrolase superfamily. MasA/MtnC family. In terms of assembly, monomer. The cofactor is Mg(2+).

It catalyses the reaction 5-methylsulfanyl-2,3-dioxopentyl phosphate + H2O = 1,2-dihydroxy-5-(methylsulfanyl)pent-1-en-3-one + phosphate. It functions in the pathway amino-acid biosynthesis; L-methionine biosynthesis via salvage pathway; L-methionine from S-methyl-5-thio-alpha-D-ribose 1-phosphate: step 3/6. Its pathway is amino-acid biosynthesis; L-methionine biosynthesis via salvage pathway; L-methionine from S-methyl-5-thio-alpha-D-ribose 1-phosphate: step 4/6. Functionally, bifunctional enzyme that catalyzes the enolization of 2,3-diketo-5-methylthiopentyl-1-phosphate (DK-MTP-1-P) into the intermediate 2-hydroxy-3-keto-5-methylthiopentenyl-1-phosphate (HK-MTPenyl-1-P), which is then dephosphorylated to form the acireductone 1,2-dihydroxy-3-keto-5-methylthiopentene (DHK-MTPene). The polypeptide is Enolase-phosphatase E1 (Streptomyces avermitilis (strain ATCC 31267 / DSM 46492 / JCM 5070 / NBRC 14893 / NCIMB 12804 / NRRL 8165 / MA-4680)).